The primary structure comprises 184 residues: Peptide deformylase (184 aa).

Fe cation-binding residues include C98 and H140. Residue E141 is part of the active site. H144 contacts Fe cation.

It belongs to the polypeptide deformylase family. It depends on Fe(2+) as a cofactor.

The catalysed reaction is N-terminal N-formyl-L-methionyl-[peptide] + H2O = N-terminal L-methionyl-[peptide] + formate. Its function is as follows. Removes the formyl group from the N-terminal Met of newly synthesized proteins. Requires at least a dipeptide for an efficient rate of reaction. N-terminal L-methionine is a prerequisite for activity but the enzyme has broad specificity at other positions. The sequence is that of Peptide deformylase from Bacteroides thetaiotaomicron (strain ATCC 29148 / DSM 2079 / JCM 5827 / CCUG 10774 / NCTC 10582 / VPI-5482 / E50).